The following is a 111-amino-acid chain: Cytochrome c oxidase subunit 7A2-like, mitochondrial (111 aa).

Residues 1–54 (MYYKFSSFTQKLAGAWASEAYTPQGLKPVSTEAPPIIFATPTKLTSSVTAYDYS) constitute a mitochondrion transit peptide. An N6-acetyllysine modification is found at Lys68. A helical membrane pass occupies residues 79-104 (PDQMLYRTTMALTLGGTIYCLIALYM).

This sequence belongs to the cytochrome c oxidase VIIa family.

Its subcellular location is the mitochondrion inner membrane. Functionally, non-functional protein. In contrast to the protein found in other strains (AC Q99KD6), cannot induce the assembly of mitochondrial respiratory supercomplexes. The chain is Cytochrome c oxidase subunit 7A2-like, mitochondrial from Mus musculus (Mouse).